A 316-amino-acid polypeptide reads, in one-letter code: Ribosomal RNA small subunit methyltransferase H (316 aa).

S-adenosyl-L-methionine contacts are provided by residues 35 to 37 (SGH), Asp-55, Phe-84, Asp-105, and Gln-112.

Belongs to the methyltransferase superfamily. RsmH family.

It is found in the cytoplasm. The enzyme catalyses cytidine(1402) in 16S rRNA + S-adenosyl-L-methionine = N(4)-methylcytidine(1402) in 16S rRNA + S-adenosyl-L-homocysteine + H(+). In terms of biological role, specifically methylates the N4 position of cytidine in position 1402 (C1402) of 16S rRNA. The polypeptide is Ribosomal RNA small subunit methyltransferase H (Streptococcus equi subsp. zooepidemicus (strain MGCS10565)).